The following is a 289-amino-acid chain: ATP synthase gamma chain (289 aa).

Belongs to the ATPase gamma chain family. As to quaternary structure, F-type ATPases have 2 components, CF(1) - the catalytic core - and CF(0) - the membrane proton channel. CF(1) has five subunits: alpha(3), beta(3), gamma(1), delta(1), epsilon(1). CF(0) has three main subunits: a, b and c.

It is found in the cell membrane. In terms of biological role, produces ATP from ADP in the presence of a proton gradient across the membrane. The gamma chain is believed to be important in regulating ATPase activity and the flow of protons through the CF(0) complex. This is ATP synthase gamma chain from Alkaliphilus metalliredigens (strain QYMF).